Consider the following 437-residue polypeptide: MIGLLTLAVFVATFAVIYRWAEGSHLAVLAGAAALVVIGTISGSYTPVMALRSVYFETLALIFGMAAISALLARSGVYAYLAAGTAELSQGQGRWILVMMALVTYGISLASNSLVTVAVVVPVTLTVCFRTGIDPVPVIIAEIIAANLGGASTMIGDFPNMILASAGKLHFNDFIAGMMPVCLILLAVMLVFFERRLGDWKGSEIPVDPVWARGEALRHSAIDRRLLSYGLIIFGVTVAGLILAGPLKVRPGWIAFVAGVTALGLGRFKDDEFFSACGGTDILFYGGLFVMVGALTSVGILDWAVNWLEGITAAHDRVRAILLMWMAAAVTIFVGGGTSAAVFAPVAATLRLDGDGQAAWWALALGIMAGSVAALPGATAGSLAMTQYSGFVKRHPELASAAAAGLQFTHREYVRWGMPLMGIFLVLGTVYIAVLVG.

11 helical membrane passes run 26–46 (LAVL…GSYT), 53–73 (SVYF…ALLA), 95–115 (WILV…NSLV), 136–156 (VPVI…TMIG), 174–194 (FIAG…VFFE), 226–246 (LLSY…LAGP), 252–268 (GWIA…LGRF), 281–301 (DILF…VGIL), 320–340 (AILL…GTSA), 358–378 (AAWW…LPGA), and 416–436 (WGMP…AVLV).

The protein belongs to the arsenite-antimonite (ArsB) efflux (TC 2.A.45) family.

It is found in the magnetosome membrane. Its function is as follows. Plays a role in biomineralization; might regulate pH in the magnetosome. The sequence is that of Magnetosome protein MamN (mamN) from Paramagnetospirillum magneticum (strain ATCC 700264 / AMB-1) (Magnetospirillum magneticum).